Reading from the N-terminus, the 491-residue chain is Proline--tRNA ligase (491 aa).

Belongs to the class-II aminoacyl-tRNA synthetase family. ProS type 3 subfamily. As to quaternary structure, homodimer.

The protein localises to the cytoplasm. It catalyses the reaction tRNA(Pro) + L-proline + ATP = L-prolyl-tRNA(Pro) + AMP + diphosphate. Its function is as follows. Catalyzes the attachment of proline to tRNA(Pro) in a two-step reaction: proline is first activated by ATP to form Pro-AMP and then transferred to the acceptor end of tRNA(Pro). The sequence is that of Proline--tRNA ligase from Halorubrum lacusprofundi (strain ATCC 49239 / DSM 5036 / JCM 8891 / ACAM 34).